Reading from the N-terminus, the 60-residue chain is Large ribosomal subunit protein bL33 (60 aa).

Belongs to the bacterial ribosomal protein bL33 family.

The chain is Large ribosomal subunit protein bL33 from Chlorobium limicola (strain DSM 245 / NBRC 103803 / 6330).